The chain runs to 156 residues: Small ribosomal subunit protein uS7 (156 aa).

The protein belongs to the universal ribosomal protein uS7 family. Part of the 30S ribosomal subunit. Contacts proteins S9 and S11.

Functionally, one of the primary rRNA binding proteins, it binds directly to 16S rRNA where it nucleates assembly of the head domain of the 30S subunit. Is located at the subunit interface close to the decoding center, probably blocks exit of the E-site tRNA. In Shewanella piezotolerans (strain WP3 / JCM 13877), this protein is Small ribosomal subunit protein uS7.